A 180-amino-acid polypeptide reads, in one-letter code: NAD(P)H-quinone oxidoreductase subunit I, chloroplastic (180 aa).

4Fe-4S ferredoxin-type domains are found at residues 55 to 84 and 95 to 124; these read GRIHFELDKCIACEVCVRVCPIDLPVVDWR and LNYSIDFGICIFCGNCVEYCPTNCLSMTEE. Positions 64, 67, 70, 74, 104, 107, 110, and 114 each coordinate [4Fe-4S] cluster.

The protein belongs to the complex I 23 kDa subunit family. In terms of assembly, NDH is composed of at least 16 different subunits, 5 of which are encoded in the nucleus. [4Fe-4S] cluster serves as cofactor.

The protein localises to the plastid. The protein resides in the chloroplast thylakoid membrane. It carries out the reaction a plastoquinone + NADH + (n+1) H(+)(in) = a plastoquinol + NAD(+) + n H(+)(out). The enzyme catalyses a plastoquinone + NADPH + (n+1) H(+)(in) = a plastoquinol + NADP(+) + n H(+)(out). NDH shuttles electrons from NAD(P)H:plastoquinone, via FMN and iron-sulfur (Fe-S) centers, to quinones in the photosynthetic chain and possibly in a chloroplast respiratory chain. The immediate electron acceptor for the enzyme in this species is believed to be plastoquinone. Couples the redox reaction to proton translocation, and thus conserves the redox energy in a proton gradient. This is NAD(P)H-quinone oxidoreductase subunit I, chloroplastic from Chloranthus spicatus (Chulantree).